Reading from the N-terminus, the 171-residue chain is MHPFYSRAATMIGEIAAAVSFISKFLRTKGLTSERQLQTFSQSLQELLAEHYKHHWFPEKPCKGSGYRCIRINHKMDPLIGQAAQRIGLSSQELFRLLPSELTLWVDPYEVSYRIGEDGSICVLYEASPAGGSTQNSTNVQMVDSRISCKEELLLGRTSPSKNYNMMTVSG.

S159 is modified (phosphoserine).

The protein belongs to the BTG family. As to quaternary structure, interacts with CNOT7 and CNOT8.

Anti-proliferative protein. The protein is Protein BTG1 (BTG1) of Bos taurus (Bovine).